Reading from the N-terminus, the 213-residue chain is Pyridoxine/pyridoxamine 5'-phosphate oxidase (213 aa).

Residues 8 to 11 and Lys67 contribute to the substrate site; that span reads RREY. FMN is bound by residues 62–67, 77–78, Arg83, Lys84, and Gln106; these read RIVLLK and FT. The substrate site is built by Tyr124, Arg128, and Ser132. Residues 141 to 142 and Trp186 each bind FMN; that span reads QS. 192–194 contacts substrate; the sequence is RLH. Arg196 contributes to the FMN binding site.

This sequence belongs to the pyridoxamine 5'-phosphate oxidase family. As to quaternary structure, homodimer. The cofactor is FMN.

It catalyses the reaction pyridoxamine 5'-phosphate + O2 + H2O = pyridoxal 5'-phosphate + H2O2 + NH4(+). The catalysed reaction is pyridoxine 5'-phosphate + O2 = pyridoxal 5'-phosphate + H2O2. The protein operates within cofactor metabolism; pyridoxal 5'-phosphate salvage; pyridoxal 5'-phosphate from pyridoxamine 5'-phosphate: step 1/1. It functions in the pathway cofactor metabolism; pyridoxal 5'-phosphate salvage; pyridoxal 5'-phosphate from pyridoxine 5'-phosphate: step 1/1. In terms of biological role, catalyzes the oxidation of either pyridoxine 5'-phosphate (PNP) or pyridoxamine 5'-phosphate (PMP) into pyridoxal 5'-phosphate (PLP). The sequence is that of Pyridoxine/pyridoxamine 5'-phosphate oxidase from Shewanella woodyi (strain ATCC 51908 / MS32).